Consider the following 255-residue polypeptide: MLQISHLYADYGGKPALEDINLTLESGELLVVLGPSGCGKTTLLNLIAGFVPYQHGSIQLAGKGIQGPGAERGVVFQNEGLLPWRNVQDNVAFGLQLAGVEKMQRLEIAHQMVKKVGLEGAEKRYIWQLSGGQRQRVGIARALAANPQLLLLDEPFGALDAFTRDQMQTLLLKLWQETGKQVLLITHDIEEAVFMATELVLLSPGPGRVLERLPLNFARRFVAGESSRSIKSDPQFIAMREYVLSRVFEQREAFS.

Residues 2–229 form the ABC transporter domain; it reads LQISHLYADY…RFVAGESSRS (228 aa). 34-41 contributes to the ATP binding site; sequence GPSGCGKT.

It belongs to the ABC transporter superfamily. Taurine importer (TC 3.A.1.17.1) family. As to quaternary structure, the complex is composed of two ATP-binding proteins (TauB), two transmembrane proteins (TauC) and a solute-binding protein (TauA).

Its subcellular location is the cell inner membrane. It catalyses the reaction taurine(out) + ATP + H2O = taurine(in) + ADP + phosphate + H(+). In terms of biological role, part of the ABC transporter complex TauABC involved in taurine import. Responsible for energy coupling to the transport system. In Escherichia coli O6:K15:H31 (strain 536 / UPEC), this protein is Taurine import ATP-binding protein TauB.